The following is a 110-amino-acid chain: UPF0339 protein YegP (110 aa).

2 tandem repeats follow at residues 10–58 (SSDS…RYEK) and 61–109 (ASNG…VKDN).

The protein belongs to the UPF0339 family. Duplicated subfamily.

In Escherichia coli O157:H7, this protein is UPF0339 protein YegP (yegP).